The following is a 702-amino-acid chain: Elongation factor G (702 aa).

Positions 8–290 (HRVRNIGIAA…AVAMYLPAPT (283 aa)) constitute a tr-type G domain. GTP-binding positions include 17–24 (AHIDAGKT), 87–91 (DTPGH), and 141–144 (NKMD).

Belongs to the TRAFAC class translation factor GTPase superfamily. Classic translation factor GTPase family. EF-G/EF-2 subfamily.

Its subcellular location is the cytoplasm. In terms of biological role, catalyzes the GTP-dependent ribosomal translocation step during translation elongation. During this step, the ribosome changes from the pre-translocational (PRE) to the post-translocational (POST) state as the newly formed A-site-bound peptidyl-tRNA and P-site-bound deacylated tRNA move to the P and E sites, respectively. Catalyzes the coordinated movement of the two tRNA molecules, the mRNA and conformational changes in the ribosome. The protein is Elongation factor G of Aliarcobacter butzleri (strain RM4018) (Arcobacter butzleri).